The primary structure comprises 134 residues: Fatty acid-binding protein 5 (134 aa).

Positions 23 to 33 (KELGVGMAMRK) match the Nuclear localization signal motif. Residues arginine 109 and 129–131 (RVY) contribute to the hexadecanoate site. N-eicosanoyl ethanolamine-binding residues include arginine 109 and tyrosine 131. 129–131 (RVY) serves as a coordination point for (9Z,12Z)-octadecadienoate.

This sequence belongs to the calycin superfamily. Fatty-acid binding protein (FABP) family. As to quaternary structure, monomer.

Its subcellular location is the cytoplasm. The protein resides in the nucleus. It is found in the synapse. The protein localises to the postsynaptic density. It localises to the secreted. The catalysed reaction is hexadecanoate(out) = hexadecanoate(in). The enzyme catalyses (9Z,12Z)-octadecadienoate(out) = (9Z,12Z)-octadecadienoate(in). It catalyses the reaction (9Z)-octadecenoate(out) = (9Z)-octadecenoate(in). Intracellular carrier for long-chain fatty acids and related active lipids, such as endocannabinoids, that regulate the metabolism and actions of the ligands they bind. In addition to the cytosolic transport, selectively delivers specific fatty acids from the cytosol to the nucleus, wherein they activate nuclear receptors. Delivers retinoic acid to the nuclear receptor peroxisome proliferator-activated receptor delta; which promotes proliferation and survival. May also serve as a synaptic carrier of endocannabinoid at central synapses and thus controls retrograde endocannabinoid signaling. Modulates inflammation by regulating PTGES induction via NF-kappa-B activation, and prostaglandin E2 (PGE2) biosynthesis during inflammation. Has the highest binding affinity for docosahexaenoic acid (DHA) and decreasing relative affinity for eicosapentaenoic acid (EPA), alpha-linolenic acid (ALA), oleic acid, palmitic acid, linoleic acid and stearic acid, respectively. The chain is Fatty acid-binding protein 5 from Pygoscelis papua (Gentoo penguin).